The chain runs to 290 residues: Protein male abnormal 3 (290 aa).

DNA-binding regions (DM) lie at residues 28–74 (CQRC…SKKK) and 94–142 (CARC…KLRR). Disordered stretches follow at residues 139–167 (KLRRSQQKSRDGKEPKRNSRRKSKDMDME) and 179–202 (IIGTSASPSPSSTTDTMSPSLSMS). The span at 146–155 (KSRDGKEPKR) shows a compositional bias: basic and acidic residues. Over residues 182–202 (TSASPSPSSTTDTMSPSLSMS) the composition is skewed to low complexity.

As to expression, expression is undetectable in hermaphrodites, but persists in males. In males, expressed in cells of the tail tip.

It localises to the nucleus. Its function is as follows. Transcription factor which binds the DNA motif 5'-[CGA][TCA][TA]ACAATGT[AT][TGA]C-3', probably as a monomer. Acts partially redundantly with the transcription factor dmd-3 to coordinate tail tip cell fusion and retraction and thereby regulate male tail tip morphogenesis. Promotes male-specific development of two tissues, the peripheral nervous system and the intestine. In the peripheral nervous system, directs differentiation of sensory ray neuroblasts into peripheral sense organs. In the intestine, causes repression of vitellogenin gene transcription. This Caenorhabditis elegans protein is Protein male abnormal 3.